A 544-amino-acid polypeptide reads, in one-letter code: Zinc finger and SCAN domain-containing protein 25 (544 aa).

Residues K3 and K22 each participate in a glycyl lysine isopeptide (Lys-Gly) (interchain with G-Cter in SUMO2) cross-link. The region spanning 42 to 124 (RLRFRQFRYQ…AMVEDLTERA (83 aa)) is the SCAN box domain. Residue K128 forms a Glycyl lysine isopeptide (Lys-Gly) (interchain with G-Cter in SUMO2) linkage. The tract at residues 157–189 (VEVKPEWGMPPGEGVQGPDPGTEEQLSQDPGDE) is disordered. Glycyl lysine isopeptide (Lys-Gly) (interchain with G-Cter in SUMO2) cross-links involve residues K278 and K285. C2H2-type zinc fingers lie at residues 348–370 (FQCP…QRTH), 375–397 (YGCV…QRTH), 403–425 (YVCS…QRSH), 431–453 (YKCG…RRTH), 459–480 (YTCE…RRAH), and 486–508 (YGCQ…QRIH). A C2H2-type 7; degenerate zinc finger spans residues 514–536 (YHCPACGRSFNQRSILNRHQKTQ).

The protein belongs to the krueppel C2H2-type zinc-finger protein family.

It localises to the nucleus. Functionally, may be involved in transcriptional regulation. The protein is Zinc finger and SCAN domain-containing protein 25 (ZSCAN25) of Homo sapiens (Human).